A 5147-amino-acid polypeptide reads, in one-letter code: Cadherin-related tumor suppressor (5147 aa).

The signal sequence occupies residues 1-35; sequence MERLLLLFFLLLAGRESLCQTGDTKLELLAPRGRS. Cadherin domains lie at 36 to 156, 157 to 270, 271 to 382, 383 to 494, 495 to 599, 600 to 708, 709 to 820, 821 to 942, 943 to 1049, 1050 to 1153, 1154 to 1278, 1279 to 1384, 1385 to 1489, 1490 to 1601, 1602 to 1713, 1714 to 1823, 1824 to 1922, 1923 to 2027, 2028 to 2167, 2168 to 2278, 2279 to 2385, 2386 to 2491, 2492 to 2596, 2597 to 2703, 2704 to 2810, 2811 to 2913, 2914 to 3013, 3014 to 3124, 3125 to 3229, 3230 to 3334, 3335 to 3439, 3440 to 3545, 3546 to 3651, and 3652 to 3756; these read YATT…SPEF, PEPS…PPIF, DHSD…DPII, SFRF…EPVF, EKSE…APQF, SQRE…DPQF, YPRH…LEML, ECGQ…APVF, ALDR…TPVF, DHTS…APQF, TNST…APEF, LRAP…APEF, TQSS…PPIF, PSTA…APVF, VSMN…VPQF, EQRS…PPQF, LDTP…PPLF, EDTV…APIF, DPMS…VPVF, ISAN…SPVF, DPKQ…PTFL, DSPY…DPVF, ELQS…IPKF, DSTT…FPTF, AYMA…APVM, EQLI…PPKF, TRLF…APEF, EHSF…PPKF, EQAE…TPRF, SVNS…PPVF, NHKE…YPQF, LQPV…PPEF, IKHY…GPTF, and TPEG…NPST. Residues 36-4583 are Extracellular-facing; it reads YATTYEQYAA…GQDAAQVADP (4548 aa). 6 N-linked (GlcNAc...) asparagine glycosylation sites follow: Asn239, Asn257, Asn276, Asn280, Asn402, and Asn461. Residues Asn605 and Asn631 are each glycosylated (N-linked (GlcNAc...) asparagine). N-linked (GlcNAc...) asparagine glycans are attached at residues Asn1155, Asn1367, and Asn1458. Residues Asn1751, Asn1831, and Asn1880 are each glycosylated (N-linked (GlcNAc...) asparagine). 6 N-linked (GlcNAc...) asparagine glycosylation sites follow: Asn2080, Asn2171, Asn2247, Asn2290, Asn2437, and Asn2581. N-linked (GlcNAc...) asparagine glycosylation occurs at Asn2799. Residues Asn2920, Asn2946, and Asn2967 are each glycosylated (N-linked (GlcNAc...) asparagine). N-linked (GlcNAc...) asparagine glycosylation is found at Asn3167, Asn3303, Asn3386, Asn3389, and Asn3525. 3 N-linked (GlcNAc...) asparagine glycosylation sites follow: Asn3852, Asn3865, and Asn3905. 4 consecutive EGF-like domains span residues 3950–4011, 4013–4049, 4052–4090, and 4092–4128; these read GYEP…EQCS, RQDPCLPNPCHSQVQCRRLGSDFQCMCPANRDGKHCE, RSDVCYSKPCRNGGSCQRSPDGSSYFCLCRPGFRGNQCE, and VSDSCRPNPCLHGGLCVSLKPGYKCNCTPGRYGRHCE. Disulfide bonds link Cys3954–Cys3966, Cys3960–Cys3999, Cys4001–Cys4010, Cys4017–Cys4028, Cys4022–Cys4037, Cys4039–Cys4048, Cys4056–Cys4067, Cys4061–Cys4078, Cys4080–Cys4089, Cys4096–Cys4107, Cys4101–Cys4116, Cys4118–Cys4127, Cys4294–Cys4320, Cys4325–Cys4341, Cys4334–Cys4350, and Cys4352–Cys4361. Positions 4129–4320 constitute a Laminin G-like 1 domain; it reads RFSYGFQPLS…LQQKGILAGC (192 aa). Asn4306 carries an N-linked (GlcNAc...) asparagine glycan. In terms of domain architecture, EGF-like 5 spans 4321-4362; that stretch reads NRQACQPALAAERCGGFAGQCIDRWSSSLCQCGGHLQSPDCS. The Laminin G-like 2 domain maps to 4402 to 4569; that stretch reads DNQQMRERRA…RYHGKIESGC (168 aa). N-linked (GlcNAc...) asparagine glycosylation is found at Asn4414, Asn4471, Asn4487, Asn4539, and Asn4550. A disulfide bond links Cys4536 and Cys4569. The chain crosses the membrane as a helical span at residues 4584–4609; it reads LSIGFTLVIVFFVILVVAILGSYVIY. The Cytoplasmic portion of the chain corresponds to 4610–5147; sequence RFRGKQEKIG…NGPAAPEEYV (538 aa). The segment at 4744–4771 is essential for stability of mitochondrial electron chain complexes I and V, and promotes interaction with ND-24; sequence PEHYDLENASSIAPSDIDIVYHYKGYRE. 3 disordered regions span residues 4787 to 4850, 4871 to 4921, and 4967 to 5041; these read AYTH…SQQP, TSSS…QTSM, and GDVD…PIPP. Residues 4826–4835 are compositionally biased toward polar residues; the sequence is SASRTHQSTP. Low complexity-rich tracts occupy residues 4838-4850 and 4891-4918; these read RLSPSSELSSQQP and SPVMSQLSGQSSSASRQKPGVPQQQAQQ. Ser4843 bears the Phosphoserine mark. Over residues 4972 to 5008 the composition is skewed to polar residues; sequence HSSTSTDESGNDSFTCSEIEYDNNSLSGDGKYSTSKS. 2 positions are modified to phosphoserine: Ser5054 and Ser5061. Positions 5113–5147 are disordered; that stretch reads PDTNGPSQQQQQQTQVVSTLRMPSSNGPAAPEEYV. The segment covering 5119 to 5131 has biased composition (low complexity); sequence SQQQQQQTQVVST.

As to quaternary structure, interacts with Fbxl7. Ft-mito interacts with NADH dehydrogenase subunit ND-24 and with ATP synthase subunit ATPsynC. In terms of processing, phosphorylated by fj on Ser/Thr of cadherin domains. Phosphorylation by fj enhances binding to ds. Phosphorylated in the cytoplasmic domain in a dco-dependent manner which is promoted by ds. Proteolytically cleaved to yield stably associated N- and C-terminal fragments. The C-terminal fragment is processed further to release a 68 kDa mitochondrial fragment, Ft-mito.

The protein resides in the cell membrane. The protein localises to the apical cell membrane. It is found in the mitochondrion. Involved in regulation of planar cell polarity in the compound eye where it is required for correct specification of the R3 and R4 photoreceptor cells by regulating Fz activity in the R3/R4 precursor cells. This is likely to occur through creation of an ft gradient so that the equatorial R3/R4 precursor cell has a higher level of ft function than its polar neighbor. Also required for planar cell polarity of wing hairs. Mediates heterophilic cell adhesion in vitro and is required to stabilize ds on the cell surface. Involved in regulation of eye imaginal disk size. Upstream component of the Hippo pathway where it is likely to act as a cell surface receptor involved in regulation of tissue size and is required for the localization and stability of ex. Probably acts as a cell surface receptor for ds. Functionally, regulates mitochondrial electron transport chain integrity and promotes oxidative phosphorylation. The chain is Cadherin-related tumor suppressor from Drosophila melanogaster (Fruit fly).